The following is a 1939-amino-acid chain: Myosin-1 (1939 aa).

One can recognise a Myosin N-terminal SH3-like domain in the interval 33 to 82; the sequence is DAKTSVFVAEPKESFVKGTVQSREGGKVTVKTEAGATLTVKEDQVFPMNP. Phosphothreonine is present on residues Thr-64 and Thr-69. Residues 86-782 form the Myosin motor domain; the sequence is DKIEDMAMMT…LLGLLEEMRD (697 aa). The residue at position 130 (Lys-130) is an N6,N6,N6-trimethyllysine. Position 179-186 (179-186) interacts with ATP; it reads GESGAGKT. Tyr-389 is modified (phosphotyrosine). A Phosphothreonine modification is found at Thr-419. Residue Tyr-424 is modified to Phosphotyrosine. The tract at residues 659–681 is actin-binding; that stretch reads LNKLMTNLRSTHPHFVRCIIPNE. A Pros-methylhistidine modification is found at His-757. The tract at residues 761 to 775 is actin-binding; it reads KFGHTKVFFKAGLLG. Positions 785-814 constitute an IQ domain; sequence LAQLITRTQARCRGFLARVEYQKMVERRES. A coiled-coil region spans residues 843 to 1939; it reads LLKSAETEKE…EVHTKIISEE (1097 aa). Ser-1092 and Ser-1096 each carry phosphoserine. Disordered stretches follow at residues 1125 to 1147 and 1153 to 1172; these read EIEAERASRAKAEKQRSDLSREL and RLEEAGGATSAQIEMNKKRE. Basic and acidic residues predominate over residues 1128-1147; that stretch reads AERASRAKAEKQRSDLSREL. 2 positions are modified to phosphoserine: Ser-1162 and Ser-1237. Thr-1241 carries the post-translational modification Phosphothreonine. Ser-1243 carries the post-translational modification Phosphoserine. The residue at position 1255 (Thr-1255) is a Phosphothreonine. Ser-1261 carries the post-translational modification Phosphoserine. Residues Thr-1265 and Thr-1286 each carry the phosphothreonine modification. Phosphoserine is present on residues Ser-1288, Ser-1292, Ser-1303, and Ser-1306. A Phosphotyrosine modification is found at Tyr-1464. Thr-1467 is modified (phosphothreonine). Ser-1474 is modified (phosphoserine). Phosphotyrosine is present on Tyr-1492. Residue Ser-1495 is modified to Phosphoserine. The residue at position 1501 (Thr-1501) is a Phosphothreonine. Ser-1514 carries the phosphoserine modification. The residue at position 1517 (Thr-1517) is a Phosphothreonine. A phosphoserine mark is found at Ser-1542, Ser-1554, Ser-1574, Ser-1600, Ser-1603, Ser-1714, and Ser-1726. Phosphothreonine occurs at positions 1730 and 1736. A Phosphoserine modification is found at Ser-1739.

The protein belongs to the TRAFAC class myosin-kinesin ATPase superfamily. Myosin family. As to quaternary structure, muscle myosin is a hexameric protein that consists of 2 heavy chain subunits (MHC), 2 alkali light chain subunits (MLC) and 2 regulatory light chain subunits (MLC-2). Interacts with SLC26A5.

The protein localises to the cytoplasm. It is found in the myofibril. Required for normal hearing. It plays a role in cochlear amplification of auditory stimuli, likely through the positive regulation of prestin (SLC26A5) activity and outer hair cell (OHC) electromotility. This is Myosin-1 (MYH1) from Sus scrofa (Pig).